The sequence spans 554 residues: Glucose-6-phosphate isomerase 1 (554 aa).

The active-site Proton donor is glutamate 359. Catalysis depends on residues histidine 390 and lysine 518.

The protein belongs to the GPI family.

It is found in the cytoplasm. The catalysed reaction is alpha-D-glucose 6-phosphate = beta-D-fructose 6-phosphate. The protein operates within carbohydrate biosynthesis; gluconeogenesis. It functions in the pathway carbohydrate degradation; glycolysis; D-glyceraldehyde 3-phosphate and glycerone phosphate from D-glucose: step 2/4. In terms of biological role, catalyzes the reversible isomerization of glucose-6-phosphate to fructose-6-phosphate. This chain is Glucose-6-phosphate isomerase 1, found in Pseudomonas putida (strain ATCC 47054 / DSM 6125 / CFBP 8728 / NCIMB 11950 / KT2440).